The following is a 258-amino-acid chain: Acyl-[acyl-carrier-protein]--UDP-N-acetylglucosamine O-acyltransferase (258 aa).

It belongs to the transferase hexapeptide repeat family. LpxA subfamily. As to quaternary structure, homotrimer.

It localises to the cytoplasm. The catalysed reaction is a (3R)-hydroxyacyl-[ACP] + UDP-N-acetyl-alpha-D-glucosamine = a UDP-3-O-[(3R)-3-hydroxyacyl]-N-acetyl-alpha-D-glucosamine + holo-[ACP]. It participates in glycolipid biosynthesis; lipid IV(A) biosynthesis; lipid IV(A) from (3R)-3-hydroxytetradecanoyl-[acyl-carrier-protein] and UDP-N-acetyl-alpha-D-glucosamine: step 1/6. Involved in the biosynthesis of lipid A, a phosphorylated glycolipid that anchors the lipopolysaccharide to the outer membrane of the cell. This chain is Acyl-[acyl-carrier-protein]--UDP-N-acetylglucosamine O-acyltransferase, found in Pseudomonas fluorescens (strain SBW25).